The primary structure comprises 309 residues: Protein FdhE homolog (309 aa).

Belongs to the FdhE family.

The protein resides in the cytoplasm. In terms of biological role, necessary for formate dehydrogenase activity. This Citrobacter koseri (strain ATCC BAA-895 / CDC 4225-83 / SGSC4696) protein is Protein FdhE homolog.